Here is a 113-residue protein sequence, read N- to C-terminus: uncharacterized protein (113 aa).

Basic and acidic residues predominate over residues 1-19; sequence MDKKSAHRNPEDAKAGKYE. The segment at 1–94 is disordered; sequence MDKKSAHRNP…NKWRGKRKVS (94 aa). Over residues 20–41 the composition is skewed to basic residues; the sequence is GKHKRKKKRKQNQNQHRSRHRS. The segment covering 52-66 has biased composition (low complexity); it reads FPSSSSSSSGSQTDS. The segment covering 75-92 has biased composition (basic residues); it reads KIKKKRREKTNKWRGKRK.

This is an uncharacterized protein from Macaca fascicularis (Crab-eating macaque).